The following is a 343-amino-acid chain: Phosphoribosylformylglycinamidine cyclo-ligase (343 aa).

The protein belongs to the AIR synthase family.

It localises to the cytoplasm. It catalyses the reaction 2-formamido-N(1)-(5-O-phospho-beta-D-ribosyl)acetamidine + ATP = 5-amino-1-(5-phospho-beta-D-ribosyl)imidazole + ADP + phosphate + H(+). It functions in the pathway purine metabolism; IMP biosynthesis via de novo pathway; 5-amino-1-(5-phospho-D-ribosyl)imidazole from N(2)-formyl-N(1)-(5-phospho-D-ribosyl)glycinamide: step 2/2. The chain is Phosphoribosylformylglycinamidine cyclo-ligase from Enterococcus faecalis (strain ATCC 700802 / V583).